A 363-amino-acid polypeptide reads, in one-letter code: Circumsporozoite protein (363 aa).

A signal peptide spans 1-22 (MKNFILLAVSSILLVDLLPTHF). Positions 48-57 (GAQQVRQSAS) are enriched in polar residues. Positions 48–278 (GAQQVRQSAS…GQNNQGANAP (231 aa)) are disordered. A compositionally biased stretch (basic and acidic residues) spans 61-96 (GLGEKPKEGADKEKKKEKGKEKEEEPKKPNENKLKQ). The interval 80 to 88 (KEKEEEPKK) is required for the binding to heparan sulfate proteoglycans (HSPGs) on the surface of host hepatocytes. Residues 93–97 (KLKQP) are region I; contains the proteolytic cleavage site. Residues 98 to 109 (NEGQPQAQGDGA) form a 1; approximate repeat. Residues 98-241 (NEGQPQAQGD…GQPQAQGDGA (144 aa)) form a 12 X 12 AA approximate tandem repeats of N-A-G-Q-P-Q-A-Q-G-D-G-A region. 11 tandem repeats follow at residues 110 to 121 (NAGQPQAQGDGA), 122 to 133 (NAGQPQAQGDGA), 134 to 145 (NAGQPQAQGDGA), 146 to 157 (NAGQPQAQGDGA), 158 to 169 (NAGQPQAQGDGA), 170 to 181 (NAGQPQAQGDGA), 182 to 193 (NAGQPQAQGDGA), 194 to 205 (NAGQPQAQGDGA), 206 to 217 (NAGQPQAQGDGA), 218 to 229 (NAGQPQAQGDGA), and 230 to 241 (NAGQPQAQGDGA). The segment covering 248 to 259 (RNGGGAPAGGNE) has biased composition (gly residues). A compositionally biased stretch (low complexity) spans 260-277 (GNKQAGKGQGQNNQGANA). The 53-residue stretch at 289 to 341 (KIRSSVTTEWTPCSVTCGNGVRIRRKAHAGNKKAEDLTMDDLEVEACVMDKCA) folds into the TSP type-1 domain. 2 disulfides stabilise this stretch: Cys301/Cys335 and Cys305/Cys340. Thr304 carries O-linked (Fuc) threonine glycosylation. Residue Cys340 is the site of GPI-anchor amidated cysteine attachment. Positions 341–363 (AGIFNVVSNSLGLVILLVLALFN) are cleaved as a propeptide — removed in mature form.

It belongs to the plasmodium circumsporozoite protein family. Post-translationally, during host cell invasion, proteolytically cleaved at the cell membrane in the region I by a papain-like cysteine protease of parasite origin. Cleavage is triggered by the sporozoite contact with highly sulfated heparan sulfate proteoglycans (HSPGs) present on the host hepatocyte cell surface. Cleavage exposes the TSP type-1 (TSR) domain and is required for productive invasion of host hepatocytes but not for adhesion to the host cell membrane. Cleavage is dispensable for sporozoite development in the oocyst, motility and for traversal of host and vector cells. O-glycosylated; maybe by POFUT2.

The protein localises to the cell membrane. It is found in the cytoplasm. Its function is as follows. Essential sporozoite protein. In the mosquito vector, required for sporozoite development in the oocyst, migration through the vector hemolymph and entry into the vector salivary glands. In the vertebrate host, required for sporozoite migration through the host dermis and infection of host hepatocytes. Binds to highly sulfated heparan sulfate proteoglycans (HSPGs) on the surface of host hepatocytes. In the vertebrate host, binds to highly sulfated heparan sulfate proteoglycans (HSPGs) on the surface of host hepatocytes and is required for sporozoite invasion of the host hepatocytes. In Plasmodium knowlesi (strain H), this protein is Circumsporozoite protein.